The primary structure comprises 99 residues: DNA-directed RNA polymerase subunit Rpo11 (99 aa).

It belongs to the archaeal Rpo11/eukaryotic RPB11/RPC19 RNA polymerase subunit family. As to quaternary structure, part of the RNA polymerase complex.

The protein resides in the cytoplasm. The enzyme catalyses RNA(n) + a ribonucleoside 5'-triphosphate = RNA(n+1) + diphosphate. DNA-dependent RNA polymerase (RNAP) catalyzes the transcription of DNA into RNA using the four ribonucleoside triphosphates as substrates. This Aeropyrum pernix (strain ATCC 700893 / DSM 11879 / JCM 9820 / NBRC 100138 / K1) protein is DNA-directed RNA polymerase subunit Rpo11.